Consider the following 207-residue polypeptide: Phosphoserine phosphatase (207 aa).

The active-site Nucleophile is the D8. Mg(2+)-binding residues include D8 and D10. Residue D10 is the Proton donor of the active site. Residues E17, R53, 96-97 (SG), and K141 contribute to the substrate site. D164 is a Mg(2+) binding site. N167 provides a ligand contact to substrate.

It belongs to the HAD-like hydrolase superfamily. SerB family. The cofactor is Mg(2+).

The enzyme catalyses O-phospho-L-serine + H2O = L-serine + phosphate. It carries out the reaction O-phospho-D-serine + H2O = D-serine + phosphate. It functions in the pathway amino-acid biosynthesis; L-serine biosynthesis; L-serine from 3-phospho-D-glycerate: step 3/3. In Campylobacter jejuni subsp. doylei (strain ATCC BAA-1458 / RM4099 / 269.97), this protein is Phosphoserine phosphatase.